A 198-amino-acid chain; its full sequence is Phycocyanobilin lyase CpcT homolog (198 aa).

This sequence belongs to the CpcT/CpeT biliprotein lyase family.

Functionally, covalently attaches a chromophore to Cys residue(s) of phycobiliproteins. In vitro is not seen to act as a chromophore lyase for ApcA1, ApcA2, ApcB, ApcD, ApcF, CpcB or PecB, the lyase activity is therefore unsure. This is Phycocyanobilin lyase CpcT homolog (cpcT2) from Nostoc sp. (strain PCC 7120 / SAG 25.82 / UTEX 2576).